The sequence spans 113 residues: Large ribosomal subunit protein bL19 (113 aa).

The protein belongs to the bacterial ribosomal protein bL19 family.

Its function is as follows. This protein is located at the 30S-50S ribosomal subunit interface and may play a role in the structure and function of the aminoacyl-tRNA binding site. The chain is Large ribosomal subunit protein bL19 from Mycobacterium leprae (strain Br4923).